The primary structure comprises 640 residues: 1,4-alpha-glucan branching enzyme GlgB (640 aa).

The active-site Nucleophile is the aspartate 318. The active-site Proton donor is glutamate 371.

This sequence belongs to the glycosyl hydrolase 13 family. GlgB subfamily. In terms of assembly, monomer.

The enzyme catalyses Transfers a segment of a (1-&gt;4)-alpha-D-glucan chain to a primary hydroxy group in a similar glucan chain.. It participates in glycan biosynthesis; glycogen biosynthesis. Its function is as follows. Catalyzes the formation of the alpha-1,6-glucosidic linkages in glycogen by scission of a 1,4-alpha-linked oligosaccharide from growing alpha-1,4-glucan chains and the subsequent attachment of the oligosaccharide to the alpha-1,6 position. The polypeptide is 1,4-alpha-glucan branching enzyme GlgB (Francisella tularensis subsp. mediasiatica (strain FSC147)).